The following is an 840-amino-acid chain: Heat shock 70 kDa protein 4 (840 aa).

Position 53 is an N6-acetyllysine (Lys-53). Phosphoserine is present on Ser-76. Residues Tyr-89 and Tyr-336 each carry the phosphotyrosine modification. Phosphoserine occurs at positions 393 and 415. The residue at position 430 (Lys-430) is an N6-acetyllysine. Residues 506 to 575 (NEEPMETDQN…QAKKAKVKTS (70 aa)) are disordered. A compositionally biased stretch (basic and acidic residues) spans 514–533 (QNAKEEEKMQVDQEEPHAEE). Thr-538 is modified (phosphothreonine). Phosphoserine occurs at positions 546 and 647. At Tyr-660 the chain carries Phosphotyrosine. The residue at position 679 (Lys-679) is an N6-acetyllysine. Ser-756 carries the phosphoserine modification. Lys-773 carries the post-translational modification N6-methyllysine. The tract at residues 782–840 (IISKPKPKVEPPKEEQKNAEQNGPVDGQGDSPGPQAAEQGTDTAVPSDSDKKLPEMDID) is disordered. 2 stretches are compositionally biased toward basic and acidic residues: residues 788 to 799 (PKVEPPKEEQKN) and 829 to 840 (DSDKKLPEMDID).

This sequence belongs to the heat shock protein 70 family. Interacts with TJP1/ZO-1.

Its subcellular location is the cytoplasm. In Canis lupus familiaris (Dog), this protein is Heat shock 70 kDa protein 4 (HSPA4).